We begin with the raw amino-acid sequence, 311 residues long: HPr kinase/phosphorylase (311 aa).

Catalysis depends on residues His139 and Lys160. Residue 154 to 161 (GDSGVGKS) coordinates ATP. Ser161 is a binding site for Mg(2+). Asp178 serves as the catalytic Proton acceptor; for phosphorylation activity. Proton donor; for dephosphorylation activity. The interval 202-211 (LEIRGIGIID) is important for the catalytic mechanism of both phosphorylation and dephosphorylation. Residue Glu203 coordinates Mg(2+). Arg244 is an active-site residue. The segment at 265-270 (PVKTGR) is important for the catalytic mechanism of dephosphorylation.

The protein belongs to the HPrK/P family. In terms of assembly, homohexamer. Mg(2+) is required as a cofactor.

It catalyses the reaction [HPr protein]-L-serine + ATP = [HPr protein]-O-phospho-L-serine + ADP + H(+). The enzyme catalyses [HPr protein]-O-phospho-L-serine + phosphate + H(+) = [HPr protein]-L-serine + diphosphate. Its function is as follows. Catalyzes the ATP- as well as the pyrophosphate-dependent phosphorylation of a specific serine residue in HPr, a phosphocarrier protein of the phosphoenolpyruvate-dependent sugar phosphotransferase system (PTS). HprK/P also catalyzes the pyrophosphate-producing, inorganic phosphate-dependent dephosphorylation (phosphorolysis) of seryl-phosphorylated HPr (P-Ser-HPr). The two antagonistic activities of HprK/P are regulated by several intracellular metabolites, which change their concentration in response to the absence or presence of rapidly metabolisable carbon sources (glucose, fructose, etc.) in the growth medium. Therefore, by controlling the phosphorylation state of HPr, HPrK/P is a sensor enzyme that plays a major role in the regulation of carbon metabolism and sugar transport: it mediates carbon catabolite repression (CCR), and regulates PTS-catalyzed carbohydrate uptake and inducer exclusion. The sequence is that of HPr kinase/phosphorylase from Levilactobacillus brevis (strain ATCC 367 / BCRC 12310 / CIP 105137 / JCM 1170 / LMG 11437 / NCIMB 947 / NCTC 947) (Lactobacillus brevis).